A 338-amino-acid polypeptide reads, in one-letter code: MTTLRLLISDSYDPWFNLAVEECIFRQMPATQRVLFLWRNADTVVIGRAQNPWKECNTRRMEEDNVRLARRSSGGGAVFHDLGNTCFTFMAGKPEYDKTISTHIVLAALNSLGVMADASGRNDLVVKTPDGDRKVSGSAYRETKDRGFHHGTLLLNADLSRLAIYLNPDKKKLAAKGITSVRSRVANLTELLPGITHKQVCQAVTEAFFVHYGERVDAEVISPDKTPDLPNFAETFARQSSWEWNFGQAPAFSHLLDERFTWGGVELHFDVEKGVITRAQVFTDSLNPAPLEALAERLQGCLYRADKLQETCEALLVDFPEQEKELRELSAWIAEAVR.

Residues 29-216 (PATQRVLFLW…AFFVHYGERV (188 aa)) enclose the BPL/LPL catalytic domain. Residues Arg71, 76 to 79 (GAVF), and Lys134 contribute to the ATP site. Position 134 (Lys134) interacts with (R)-lipoate.

The protein belongs to the LplA family. In terms of assembly, monomer.

It is found in the cytoplasm. The enzyme catalyses L-lysyl-[lipoyl-carrier protein] + (R)-lipoate + ATP = N(6)-[(R)-lipoyl]-L-lysyl-[lipoyl-carrier protein] + AMP + diphosphate + H(+). The protein operates within protein modification; protein lipoylation via exogenous pathway; protein N(6)-(lipoyl)lysine from lipoate: step 1/2. Its pathway is protein modification; protein lipoylation via exogenous pathway; protein N(6)-(lipoyl)lysine from lipoate: step 2/2. Functionally, catalyzes both the ATP-dependent activation of exogenously supplied lipoate to lipoyl-AMP and the transfer of the activated lipoyl onto the lipoyl domains of lipoate-dependent enzymes. The polypeptide is Lipoate-protein ligase A (Salmonella newport (strain SL254)).